Consider the following 354-residue polypeptide: Glycerol-3-phosphate dehydrogenase [NAD(+)], glycosomal (354 aa).

NAD(+) contacts are provided by residues 15–20 (GSGAFG), phenylalanine 90, lysine 118, and alanine 150. Lysine 118 serves as a coordination point for substrate. Residue lysine 203 is the Proton acceptor of the active site. Residues arginine 267 and glutamate 293 each contribute to the NAD(+) site. Residue 267 to 268 (RN) participates in substrate binding. The Microbody targeting signal signature appears at 352-354 (SKM).

The protein belongs to the NAD-dependent glycerol-3-phosphate dehydrogenase family.

The protein localises to the glycosome. It catalyses the reaction sn-glycerol 3-phosphate + NAD(+) = dihydroxyacetone phosphate + NADH + H(+). This is Glycerol-3-phosphate dehydrogenase [NAD(+)], glycosomal (GPD) from Trypanosoma brucei brucei.